The following is a 115-amino-acid chain: Parathyroid hormone (115 aa).

The signal sequence occupies residues 1–25 (MMSANTVAKVMIIMLAVCLLTQTDG). Positions 26–31 (KPVRKR) are excised as a propeptide. The interval 51–69 (RMQWLRRKLQDMHNFVSLG) is important for receptor binding.

Belongs to the parathyroid hormone family. As to quaternary structure, interacts with PTH1R (via N-terminal extracellular domain). In terms of tissue distribution, highly expressed in the parathyroid gland. Also expressed in the placenta, thymus and testis.

The protein resides in the secreted. Functionally, parathyroid hormone elevates calcium level by dissolving the salts in bone and preventing their renal excretion. Acts by binding to its receptor, PTH1R, activating G protein-coupled receptor signaling. Stimulates [1-14C]-2-deoxy-D-glucose (2DG) transport and glycogen synthesis in osteoblastic cells. This chain is Parathyroid hormone, found in Mus musculus (Mouse).